We begin with the raw amino-acid sequence, 160 residues long: Major pollen allergen Bet v 1-A (160 aa).

Positions 55, 82, 84, and 101 each coordinate brassinolide.

Belongs to the BetVI family.

It localises to the cytoplasm. In terms of biological role, may be a general steroid carrier protein. The sequence is that of Major pollen allergen Bet v 1-A (BETVIA) from Betula pendula (European white birch).